Here is a 400-residue protein sequence, read N- to C-terminus: UDP-glucuronate:glycolipid 2-beta-glucuronosyltransferase (400 aa).

Catalysis depends on aspartate 157, which acts as the Proton acceptor. UDP-alpha-D-glucuronate-binding positions include 230 to 231, 272 to 273, tyrosine 292, and 306 to 310; these read SM, EM, and MKLLQ. The segment at 377 to 400 is disordered; the sequence is PETRLYPHPPTAAPQLSSEAALSH. The span at 390-400 shows a compositional bias: polar residues; the sequence is PQLSSEAALSH.

It belongs to the glycosyltransferase 70 family.

Its subcellular location is the cell inner membrane. It carries out the reaction alpha-D-Man-(1-&gt;3)-beta-D-Glc-(1-&gt;4)-alpha-D-Glc-1-di-trans,octa-cis-undecaprenyl diphosphate + UDP-alpha-D-glucuronate = beta-D-GlcA-(1-&gt;2)-alpha-D-Man-(1-&gt;3)-beta-D-Glc-(1-&gt;4)-alpha-D-Glc-di-trans,octa-cis-undecaprenyl diphosphate + UDP + H(+). The protein operates within glycan biosynthesis; xanthan biosynthesis. Its function is as follows. Catalyzes the transfer of a glucuronic acid (GlcA) residue from UDP-glucuronate to mannose-alpha-1,3-glucose-beta-1,4-glucose-P-P-polyisoprenyl to form the lipid-linked tetrasaccharide GlcA-Man-Glc(2)-PP-Pol, with a glucuronic acid-beta-mannose linkage. Is involved in the biosynthesis of the exopolysaccharide xanthan, since it catalyzes the fourth glycosylation step in the assembly of the pentasaccharide-P-P-polyisoprenyl repeating unit of xanthan. Is unable to use the trisaccharide acceptor freed from the pyrophosphate lipid moiety. Does not show specificity for the lipidic portion of the acceptor. Shows diminished activity when tested with 6-O-acetyl-mannose-alpha-1,3-glucose-beta-1,4-glucose-P-P-polyisoprenyl, a putative intermediate in the synthesis of xanthan; this could indicate that acetylation of the internal mannose takes place after the formation of the GumK product. In Xanthomonas campestris pv. campestris, this protein is UDP-glucuronate:glycolipid 2-beta-glucuronosyltransferase (gumK).